The primary structure comprises 241 residues: Uracil-DNA glycosylase (241 aa).

D71 serves as the catalytic Proton acceptor.

The protein belongs to the uracil-DNA glycosylase (UDG) superfamily. UNG family.

Its subcellular location is the cytoplasm. The enzyme catalyses Hydrolyzes single-stranded DNA or mismatched double-stranded DNA and polynucleotides, releasing free uracil.. Excises uracil residues from the DNA which can arise as a result of misincorporation of dUMP residues by DNA polymerase or due to deamination of cytosine. This is Uracil-DNA glycosylase from Xanthomonas euvesicatoria pv. vesicatoria (strain 85-10) (Xanthomonas campestris pv. vesicatoria).